We begin with the raw amino-acid sequence, 930 residues long: Endoplasmic reticulum aminopeptidase 1 (930 aa).

The Cytoplasmic segment spans residues 1-2 (MP). The chain crosses the membrane as a helical; Signal-anchor for type II membrane protein span at residues 3-23 (SLLPLVLTFLSVSSPSWCQNS). The Lumenal portion of the chain corresponds to 24 to 930 (DIESLKASNG…WLQKEKPELL (907 aa)). N-linked (GlcNAc...) asparagine glycans are attached at residues asparagine 59 and asparagine 143. Residues glutamate 172 and 306-310 (GAMEN) each bind substrate. Residue histidine 342 coordinates Zn(2+). Residue glutamate 343 is part of the active site. Residues histidine 346 and glutamate 365 each contribute to the Zn(2+) site. The cysteines at positions 393 and 432 are disulfide-linked. N-linked (GlcNAc...) asparagine glycosylation is found at asparagine 403 and asparagine 655. A disulfide bridge connects residues cysteine 725 and cysteine 732. Residues asparagine 749 and asparagine 890 are each glycosylated (N-linked (GlcNAc...) asparagine).

It belongs to the peptidase M1 family. As to quaternary structure, monomer. May also exist as a heterodimer; with ERAP2. Interacts with RBMX. Zn(2+) is required as a cofactor. N-glycosylated.

The protein resides in the endoplasmic reticulum membrane. Functionally, aminopeptidase that plays a central role in peptide trimming, a step required for the generation of most HLA class I-binding peptides. Peptide trimming is essential to customize longer precursor peptides to fit them to the correct length required for presentation on MHC class I molecules. Strongly prefers substrates 9-16 residues long. Rapidly degrades 13-mer to a 9-mer and then stops. Preferentially hydrolyzes the residue Leu and peptides with a hydrophobic C-terminus, while it has weak activity toward peptides with charged C-terminus. May play a role in the inactivation of peptide hormones. May be involved in the regulation of blood pressure through the inactivation of angiotensin II and/or the generation of bradykinin in the kidney. The polypeptide is Endoplasmic reticulum aminopeptidase 1 (Erap1) (Mus musculus (Mouse)).